A 343-amino-acid polypeptide reads, in one-letter code: GTPase Obg (343 aa).

The region spanning 1–157 (MKFIDEVSIS…IEVRLELKLI (157 aa)) is the Obg domain. The disordered stretch occupies residues 13 to 44 (SGRGGPGCVSFRRESMQARGGPDGGNGGKGGD). The span at 33–43 (GPDGGNGGKGG) shows a compositional bias: gly residues. The OBG-type G domain occupies 158-338 (ADVGIVGFPN…FVQELARQIL (181 aa)). Residues 164–171 (GFPNAGKS), 189–193 (FTTLT), 211–214 (DIPG), 290–293 (NKID), and 319–321 (SAV) each bind GTP. Residues S171 and T191 each coordinate Mg(2+).

Belongs to the TRAFAC class OBG-HflX-like GTPase superfamily. OBG GTPase family. As to quaternary structure, monomer. Mg(2+) serves as cofactor.

It localises to the cytoplasm. An essential GTPase which binds GTP, GDP and possibly (p)ppGpp with moderate affinity, with high nucleotide exchange rates and a fairly low GTP hydrolysis rate. Plays a role in control of the cell cycle, stress response, ribosome biogenesis and in those bacteria that undergo differentiation, in morphogenesis control. This Bdellovibrio bacteriovorus (strain ATCC 15356 / DSM 50701 / NCIMB 9529 / HD100) protein is GTPase Obg.